A 408-amino-acid chain; its full sequence is 1-deoxy-D-xylulose 5-phosphate reductoisomerase (408 aa).

NADPH-binding residues include Thr27, Gly28, Ser29, Ile30, Ala53, Arg54, Asn55, and Asn140. Lys141 contributes to the 1-deoxy-D-xylulose 5-phosphate binding site. NADPH is bound at residue Glu142. Asp166 is a binding site for Mn(2+). Residues Ser167, Glu168, Ser192, and His215 each contribute to the 1-deoxy-D-xylulose 5-phosphate site. Residue Glu168 coordinates Mn(2+). Gly221 contacts NADPH. The 1-deoxy-D-xylulose 5-phosphate site is built by Ser228, Asn233, Lys234, and Glu237. Glu237 lines the Mn(2+) pocket.

Belongs to the DXR family. Mg(2+) is required as a cofactor. It depends on Mn(2+) as a cofactor.

The enzyme catalyses 2-C-methyl-D-erythritol 4-phosphate + NADP(+) = 1-deoxy-D-xylulose 5-phosphate + NADPH + H(+). It participates in isoprenoid biosynthesis; isopentenyl diphosphate biosynthesis via DXP pathway; isopentenyl diphosphate from 1-deoxy-D-xylulose 5-phosphate: step 1/6. In terms of biological role, catalyzes the NADPH-dependent rearrangement and reduction of 1-deoxy-D-xylulose-5-phosphate (DXP) to 2-C-methyl-D-erythritol 4-phosphate (MEP). The chain is 1-deoxy-D-xylulose 5-phosphate reductoisomerase from Nitratidesulfovibrio vulgaris (strain DP4) (Desulfovibrio vulgaris).